A 236-amino-acid chain; its full sequence is Probable metal transport system ATP-binding protein CT_416 (236 aa).

The ABC transporter domain occupies 5-236 (MLLENVSFRY…FCCNTFGRCP (232 aa)). ATP is bound at residue 39 to 46 (GPNGGGKT).

It belongs to the ABC transporter superfamily.

Its subcellular location is the cell inner membrane. Functionally, part of an ATP-driven transport system CT_415/CT_416/CT_417 for a metal. Probably responsible for energy coupling to the transport system. The chain is Probable metal transport system ATP-binding protein CT_416 from Chlamydia trachomatis serovar D (strain ATCC VR-885 / DSM 19411 / UW-3/Cx).